The following is a 676-amino-acid chain: Cysteine-rich receptor-like protein kinase 8 (676 aa).

The signal sequence occupies residues 1–34; sequence MYIVSMFGLAGLEALICFIFLFLFSFLTSFKASA. The Extracellular portion of the chain corresponds to 35–291; sequence QNPFYLNHDC…IPGKSGNSTV (257 aa). Gnk2-homologous domains are found at residues 38–142 and 151–255; these read FYLN…HKNF and ELIM…LYAF. N-linked (GlcNAc...) asparagine glycosylation is found at Asn-46, Asn-53, Asn-71, Asn-114, Asn-159, Asn-187, Asn-257, and Asn-288. Residues 292 to 312 form a helical membrane-spanning segment; it reads LVVAIVVLAVLLFIALVGYCF. Over 313–676 the chain is Cytoplasmic; the sequence is LAQRTKKTFD…DELITDLYPR (364 aa). In terms of domain architecture, Protein kinase spans 353-639; the sequence is FAESNKIGRG…TLPVPRQPGF (287 aa). ATP-binding positions include 359–367 and Lys-381; that span reads IGRGGFGEV. Residue Tyr-426 is modified to Phosphotyrosine. Residue Asp-478 is the Proton acceptor of the active site. Residue Ser-482 is modified to Phosphoserine. Thr-518 carries the post-translational modification Phosphothreonine. Tyr-526 carries the phosphotyrosine modification. The disordered stretch occupies residues 640-666; it reads FIQSSPVKDPTDSDQSTTTKSTPASID. Positions 652-662 are enriched in low complexity; the sequence is SDQSTTTKSTP.

The protein belongs to the protein kinase superfamily. Ser/Thr protein kinase family. CRK subfamily.

Its subcellular location is the membrane. It carries out the reaction L-seryl-[protein] + ATP = O-phospho-L-seryl-[protein] + ADP + H(+). The catalysed reaction is L-threonyl-[protein] + ATP = O-phospho-L-threonyl-[protein] + ADP + H(+). This chain is Cysteine-rich receptor-like protein kinase 8 (CRK8), found in Arabidopsis thaliana (Mouse-ear cress).